The chain runs to 506 residues: Galactose/methyl galactoside import ATP-binding protein MglA (506 aa).

2 consecutive ABC transporter domains span residues 14 to 249 and 264 to 506; these read LEMS…VGRS and VILE…SLHL. 46–53 lines the ATP pocket; it reads GENGAGKS.

It belongs to the ABC transporter superfamily. Galactose/methyl galactoside importer (TC 3.A.1.2.3) family. The complex is composed of one ATP-binding protein (MglA), two transmembrane proteins (MglC) and a solute-binding protein (MglB).

The protein localises to the cell inner membrane. It catalyses the reaction D-galactose(out) + ATP + H2O = D-galactose(in) + ADP + phosphate + H(+). The catalysed reaction is methyl beta-D-galactoside(out) + ATP + H2O = methyl beta-D-galactoside(in) + ADP + phosphate + H(+). Part of the ABC transporter complex MglABC involved in galactose/methyl galactoside import. Responsible for energy coupling to the transport system. The protein is Galactose/methyl galactoside import ATP-binding protein MglA of Shigella flexneri serotype 5b (strain 8401).